The sequence spans 551 residues: Cytochrome c oxidase subunit 1 (551 aa).

The helical transmembrane segment at 29–49 (VIGIQYLVTSFLFFFIGGSFA) threads the bilayer. Histidine 76 is a Fe(II)-heme a binding site. 11 consecutive transmembrane segments (helical) span residues 79 to 99 (IMIF…LIPL), 113 to 133 (AVAF…FFVG), 156 to 176 (LWIL…INFV), 205 to 225 (LILL…FDLI), 245 to 265 (LFWF…FGVI), 283 to 303 (IAYS…HHMF), 313 to 333 (MFFM…IFSW), 348 to 368 (MLFA…GVMV), 382 to 402 (FVVG…LFSG), 424 to 444 (FILT…LGLM), and 466 to 486 (IGAY…FWSL). The Cu cation site is built by histidine 251, tyrosine 255, histidine 300, and histidine 301. Positions 251-255 (HPAVY) form a cross-link, 1'-histidyl-3'-tyrosine (His-Tyr). Histidine 386 is a binding site for heme a3. Position 388 (histidine 388) interacts with Fe(II)-heme a.

The protein belongs to the heme-copper respiratory oxidase family. Cu(2+) is required as a cofactor. It depends on heme as a cofactor.

It is found in the cell membrane. The catalysed reaction is 4 Fe(II)-[cytochrome c] + O2 + 8 H(+)(in) = 4 Fe(III)-[cytochrome c] + 2 H2O + 4 H(+)(out). Its pathway is energy metabolism; oxidative phosphorylation. Its function is as follows. Cytochrome c oxidase is the component of the respiratory chain that catalyzes the reduction of oxygen to water. Subunits 1-3 form the functional core of the enzyme complex. CO I is the catalytic subunit of the enzyme. Electrons originating in cytochrome c are transferred via the copper A center of subunit 2 and heme A of subunit 1 to the bimetallic center formed by heme A3 and copper B. The protein is Cytochrome c oxidase subunit 1 (ctaD) of Synechocystis sp. (strain ATCC 27184 / PCC 6803 / Kazusa).